Here is a 268-residue protein sequence, read N- to C-terminus: Energy-coupling factor transporter transmembrane protein EcfT (268 aa).

Transmembrane regions (helical) follow at residues 26 to 46, 47 to 67, 73 to 93, 116 to 136, 151 to 171, and 246 to 266; these read ILAV…LSYG, ILIG…GLLL, LWII…GEAL, LVLL…IVLT, VPAH…PTLL, and ALTG…RWGI.

The protein belongs to the energy-coupling factor EcfT family. Forms a stable energy-coupling factor (ECF) transporter complex composed of 2 membrane-embedded substrate-binding proteins (S component), 2 ATP-binding proteins (A component) and 2 transmembrane proteins (T component). May be able to interact with more than 1 S component at a time.

The protein resides in the cell membrane. Functionally, transmembrane (T) component of an energy-coupling factor (ECF) ABC-transporter complex. Unlike classic ABC transporters this ECF transporter provides the energy necessary to transport a number of different substrates. The chain is Energy-coupling factor transporter transmembrane protein EcfT from Acidaminococcus fermentans (strain ATCC 25085 / DSM 20731 / CCUG 9996 / CIP 106432 / VR4).